The chain runs to 514 residues: Membrane-bound lytic murein transglycosylase F (514 aa).

Positions methionine 1 to glycine 30 are cleaved as a signal peptide. The interval lysine 31–glycine 269 is non-LT domain. The interval aspartate 270 to lysine 514 is LT domain. Glutamate 314 is an active-site residue.

It in the N-terminal section; belongs to the bacterial solute-binding protein 3 family. The protein in the C-terminal section; belongs to the transglycosylase Slt family.

The protein resides in the cell outer membrane. It catalyses the reaction Exolytic cleavage of the (1-&gt;4)-beta-glycosidic linkage between N-acetylmuramic acid (MurNAc) and N-acetylglucosamine (GlcNAc) residues in peptidoglycan, from either the reducing or the non-reducing ends of the peptidoglycan chains, with concomitant formation of a 1,6-anhydrobond in the MurNAc residue.. Murein-degrading enzyme that degrades murein glycan strands and insoluble, high-molecular weight murein sacculi, with the concomitant formation of a 1,6-anhydromuramoyl product. Lytic transglycosylases (LTs) play an integral role in the metabolism of the peptidoglycan (PG) sacculus. Their lytic action creates space within the PG sacculus to allow for its expansion as well as for the insertion of various structures such as secretion systems and flagella. The chain is Membrane-bound lytic murein transglycosylase F from Salmonella arizonae (strain ATCC BAA-731 / CDC346-86 / RSK2980).